Here is a 213-residue protein sequence, read N- to C-terminus: Thymidylate kinase (213 aa).

10 to 17 (GLEGAGKT) lines the ATP pocket.

The protein belongs to the thymidylate kinase family.

It catalyses the reaction dTMP + ATP = dTDP + ADP. In terms of biological role, phosphorylation of dTMP to form dTDP in both de novo and salvage pathways of dTTP synthesis. In Klebsiella pneumoniae (strain 342), this protein is Thymidylate kinase.